Here is a 275-residue protein sequence, read N- to C-terminus: Seminase (275 aa).

Positions 1 to 19 (MKRLLFLFLLAGILINNHA) are cleaved as a signal peptide. Asparagine 23 is a glycosylation site (N-linked (GlcNAc...) asparagine). Residues 44–268 (VIGGRVTTNA…VKPFIVKGIK (225 aa)) enclose the Peptidase S1 domain. The cysteines at positions 70 and 86 are disulfide-linked. Catalysis depends on charge relay system residues histidine 85 and aspartate 131. Disulfide bonds link cysteine 194–cysteine 210 and cysteine 220–cysteine 244. Serine 224 acts as the Charge relay system in catalysis.

The protein belongs to the peptidase S1 family. Undergoes cleavage in the male during mating with a cleaved product detected in the ejaculatory duct and/or bulb of males by 8-10 minutes after the start of mating. Further cleavage occurs in the mated female. As to expression, produced in the male accessory glands and secreted into seminal fluid.

It localises to the secreted. Functionally, seminal fluid protease which is required for cleavage and probably also activation of the metalloprotease Semp1. Also required for a number of female post-mating responses independent of Semp1 including egg laying and sperm usage. The chain is Seminase from Drosophila melanogaster (Fruit fly).